The sequence spans 472 residues: Pyridine nucleotide-disulfide oxidoreductase domain-containing protein 1 (472 aa).

Belongs to the class-I pyridine nucleotide-disulfide oxidoreductase family. PYROXD1 subfamily. FAD is required as a cofactor.

Probable oxidoreductase. The protein is Pyridine nucleotide-disulfide oxidoreductase domain-containing protein 1 of Drosophila melanogaster (Fruit fly).